The sequence spans 266 residues: Non-structural maintenance of chromosomes element 1 homolog (266 aa).

Residues 1–102 (MQGSTRRAGA…SVSKMATDFA (102 aa)) form an interaction with NSMCE3 region. Residues 191–232 (CNICHSLLIQGQSCETCGIRMHLPCVAKYFQSTAEPRCPHCN) form an RING-type; atypical zinc finger. The disordered stretch occupies residues 246–266 (EKEREAGISKSSRKSLRTRQH). The span at 256–266 (SSRKSLRTRQH) shows a compositional bias: basic residues.

It belongs to the NSE1 family. In terms of assembly, component of the SMC5-SMC6 complex which consists at least of SMC5, SMC6, NSMCE2, NSMCE1, NSMCE4A or EID3 and NSMCE3. NSMCE1, NSMCE4A or EID3 and NSMCE3 probably form a subcomplex that bridges the head domains of the SMC5-SMC6 heterodimer. Interacts with NSMCE3. Ubiquitinated.

Its subcellular location is the nucleus. The protein localises to the chromosome. The protein resides in the telomere. The enzyme catalyses S-ubiquitinyl-[E2 ubiquitin-conjugating enzyme]-L-cysteine + [acceptor protein]-L-lysine = [E2 ubiquitin-conjugating enzyme]-L-cysteine + N(6)-ubiquitinyl-[acceptor protein]-L-lysine.. Functionally, RING-type zinc finger-containing E3 ubiquitin ligase that assembles with melanoma antigen protein (MAGE) to catalyze the direct transfer of ubiquitin from E2 ubiquitin-conjugating enzyme to a specific substrate. Within MAGE-RING ubiquitin ligase complex, MAGE stimulates and specifies ubiquitin ligase activity likely through recruitment and/or stabilization of the E2 ubiquitin-conjugating enzyme at the E3:substrate complex. Involved in maintenance of genome integrity, DNA damage response and DNA repair. NSMCE3/MAGEG1 and NSMCE1 ubiquitin ligase are components of SMC5-SMC6 complex and may positively regulate homologous recombination-mediated DNA repair. The protein is Non-structural maintenance of chromosomes element 1 homolog (Nsmce1) of Rattus norvegicus (Rat).